We begin with the raw amino-acid sequence, 133 residues long: Exosome complex protein C1739.07 (133 aa).

Residues 96–133 (VNPKTEAVNTSNAAISSSSSNRPKVAKDAATRIIKHHT) form a disordered region. A compositionally biased stretch (low complexity) spans 102–116 (AVNTSNAAISSSSSN).

The protein belongs to the C1D family. Component of the exosome multienzyme ribonuclease complex. Interacts with cut3.

It localises to the cytoplasm. The protein resides in the nucleus. Its function is as follows. Required for exosome-dependent processing of pre-rRNA and small nucleolar RNA (snRNA) precursors. Involved in processing of 35S pre-rRNA at the A0, A1 and A2 sites. In Schizosaccharomyces pombe (strain 972 / ATCC 24843) (Fission yeast), this protein is Exosome complex protein C1739.07.